A 200-amino-acid polypeptide reads, in one-letter code: Recombination protein RecR (200 aa).

A C4-type zinc finger spans residues 59–74 (CEKCNTFTEAQICEVC). The region spanning 82–177 (ALLCVVETPA…AVTRLARGVP (96 aa)) is the Toprim domain.

It belongs to the RecR family.

In terms of biological role, may play a role in DNA repair. It seems to be involved in an RecBC-independent recombinational process of DNA repair. It may act with RecF and RecO. The chain is Recombination protein RecR from Burkholderia mallei (strain NCTC 10247).